The chain runs to 126 residues: Aspartate 1-decarboxylase (126 aa).

The Schiff-base intermediate with substrate; via pyruvic acid role is filled by Ser25. The residue at position 25 (Ser25) is a Pyruvic acid (Ser). Thr57 is a binding site for substrate. Tyr58 functions as the Proton donor in the catalytic mechanism. Position 73–75 (73–75 (GAA)) interacts with substrate.

The protein belongs to the PanD family. Heterooctamer of four alpha and four beta subunits. Pyruvate serves as cofactor. Is synthesized initially as an inactive proenzyme, which is activated by self-cleavage at a specific serine bond to produce a beta-subunit with a hydroxyl group at its C-terminus and an alpha-subunit with a pyruvoyl group at its N-terminus.

It is found in the cytoplasm. It catalyses the reaction L-aspartate + H(+) = beta-alanine + CO2. It participates in cofactor biosynthesis; (R)-pantothenate biosynthesis; beta-alanine from L-aspartate: step 1/1. Functionally, catalyzes the pyruvoyl-dependent decarboxylation of aspartate to produce beta-alanine. This Cellvibrio japonicus (strain Ueda107) (Pseudomonas fluorescens subsp. cellulosa) protein is Aspartate 1-decarboxylase.